The primary structure comprises 593 residues: DNA primase (593 aa).

A CHC2-type zinc finger spans residues 38-62 (CPFHQEKTPSFTVSDSKRFFYCFGC). The region spanning 250–332 (NRSILVEGYF…EKKISFIRLP (83 aa)) is the Toprim domain. Residues Glu-256, Asp-300, and Asp-302 each contribute to the Mg(2+) site.

This sequence belongs to the DnaG primase family. As to quaternary structure, monomer. Interacts with DnaB. It depends on Zn(2+) as a cofactor. Mg(2+) serves as cofactor.

The enzyme catalyses ssDNA + n NTP = ssDNA/pppN(pN)n-1 hybrid + (n-1) diphosphate.. Its function is as follows. RNA polymerase that catalyzes the synthesis of short RNA molecules used as primers for DNA polymerase during DNA replication. This Rickettsia prowazekii (strain Madrid E) protein is DNA primase.